Here is a 460-residue protein sequence, read N- to C-terminus: Lipase member I (460 aa).

Residues 1-15 (MRVYIFLCLMCWVRS) form the signal peptide. N63 is a glycosylation site (N-linked (GlcNAc...) asparagine). The active-site Nucleophile is the S159. D183 (charge relay system) is an active-site residue. Cysteines 238 and 251 form a disulfide. Residue H253 is the Charge relay system of the active site. 2 cysteine pairs are disulfide-bonded: C275–C286 and C289–C297. A glycan (N-linked (GlcNAc...) asparagine) is linked at N396. C436 and C455 are oxidised to a cystine.

The protein belongs to the AB hydrolase superfamily. Lipase family. As to quaternary structure, interacts with heparin with a high affinity. In terms of tissue distribution, expressed in testis. Expressed exclusively at the connecting piece of the sperm.

The protein localises to the cell membrane. Its subcellular location is the secreted. It carries out the reaction 1-hexadecanoyl-2-(9Z-octadecenoyl)-sn-glycero-3-phosphate + H2O = 2-(9Z-octadecenoyl)-sn-glycero-3-phosphate + hexadecanoate + H(+). Inhibited by sodium vanadate. Functionally, hydrolyzes specifically phosphatidic acid (PA) to produce 2-acyl lysophosphatidic acid (LPA; a potent bioactive lipid mediator) and fatty acid. Does not hydrolyze other phospholipids, like phosphatidylserine (PS), phosphatidylcholine (PC) and phosphatidylethanolamine (PE) or triacylglycerol (TG). In Homo sapiens (Human), this protein is Lipase member I (LIPI).